Consider the following 202-residue polypeptide: Glycerol-3-phosphate acyltransferase (202 aa).

A run of 5 helical transmembrane segments spans residues 3–23, 87–107, 118–138, 144–164, and 167–187; these read NLII…LILA, LLWS…YLLF, GAMI…WVVI, ISSL…FIFN, and LEIH…YKHL.

Belongs to the PlsY family. Probably interacts with PlsX.

It localises to the cell inner membrane. It catalyses the reaction an acyl phosphate + sn-glycerol 3-phosphate = a 1-acyl-sn-glycero-3-phosphate + phosphate. It participates in lipid metabolism; phospholipid metabolism. In terms of biological role, catalyzes the transfer of an acyl group from acyl-phosphate (acyl-PO(4)) to glycerol-3-phosphate (G3P) to form lysophosphatidic acid (LPA). This enzyme utilizes acyl-phosphate as fatty acyl donor, but not acyl-CoA or acyl-ACP. This chain is Glycerol-3-phosphate acyltransferase, found in Campylobacter jejuni subsp. jejuni serotype O:2 (strain ATCC 700819 / NCTC 11168).